The sequence spans 168 residues: S-ribosylhomocysteine lyase (168 aa).

Fe cation-binding residues include H54, H58, and C128.

This sequence belongs to the LuxS family. In terms of assembly, homodimer. Fe cation serves as cofactor.

The catalysed reaction is S-(5-deoxy-D-ribos-5-yl)-L-homocysteine = (S)-4,5-dihydroxypentane-2,3-dione + L-homocysteine. Functionally, involved in the synthesis of autoinducer 2 (AI-2) which is secreted by bacteria and is used to communicate both the cell density and the metabolic potential of the environment. The regulation of gene expression in response to changes in cell density is called quorum sensing. Catalyzes the transformation of S-ribosylhomocysteine (RHC) to homocysteine (HC) and 4,5-dihydroxy-2,3-pentadione (DPD). The sequence is that of S-ribosylhomocysteine lyase from Neisseria meningitidis serogroup C / serotype 2a (strain ATCC 700532 / DSM 15464 / FAM18).